Consider the following 186-residue polypeptide: uncharacterized protein (186 aa).

A signal peptide spans 1–28 (MSVKPAALFRISAALAVAGLGASLIASA).

This is an uncharacterized protein from Rhizobium meliloti (strain 1021) (Ensifer meliloti).